Here is a 154-residue protein sequence, read N- to C-terminus: Myoglobin (154 aa).

A Globin domain is found at 2–148 (GLSDAEWQLV…FRNDIAAKYK (147 aa)). A Phosphoserine modification is found at Ser-4. His-65 serves as a coordination point for nitrite. His-65 is a binding site for O2. Residue Thr-68 is modified to Phosphothreonine. His-94 lines the heme b pocket.

The protein belongs to the globin family. Monomeric.

The protein resides in the cytoplasm. It localises to the sarcoplasm. It catalyses the reaction Fe(III)-heme b-[protein] + nitric oxide + H2O = Fe(II)-heme b-[protein] + nitrite + 2 H(+). It carries out the reaction H2O2 + AH2 = A + 2 H2O. In terms of biological role, monomeric heme protein which primary function is to store oxygen and facilitate its diffusion within muscle tissues. Reversibly binds oxygen through a pentacoordinated heme iron and enables its timely and efficient release as needed during periods of heightened demand. Depending on the oxidative conditions of tissues and cells, and in addition to its ability to bind oxygen, it also has a nitrite reductase activity whereby it regulates the production of bioactive nitric oxide. Under stress conditions, like hypoxia and anoxia, it also protects cells against reactive oxygen species thanks to its pseudoperoxidase activity. This is Myoglobin (MB) from Orycteropus afer (Aardvark).